The chain runs to 528 residues: Ulvan lyase, short isoform (528 aa).

The first 29 residues, 1 to 29 (MKINLSMRELVSRLSTTLKTAIALSVLTA), serve as a signal peptide directing secretion. The N-palmitoyl cysteine moiety is linked to residue Cys30. A lipid anchor (S-diacylglycerol cysteine) is attached at Cys30. Residue 151 to 152 (SH) coordinates substrate. The active-site Proton donor/acceptor is the His152. Ca(2+) is bound by residues Asp218, Asp228, and Lys230. Positions 309 and 326 each coordinate substrate. Residues Asn329, Asp332, and Phe334 each coordinate Ca(2+). Residue His390 participates in substrate binding.

It belongs to the polysaccharide lyase 24 family.

Its subcellular location is the secreted. It localises to the cell membrane. Functionally, ulvan lyase involved in ulvan degradation. Ulvan is the main polysaccharide component of the Ulvales (green seaweed) cell wall. It is composed of disaccharide building blocks comprising 3-sulfated rhamnose (Rha3S) linked to D-glucuronic acid (GlcA), L-iduronic acid (IduA), or D-xylose (Xyl). Ulvan lyase catalyzes preferentially the endolytic cleavage of the glycosidic bond between Rha3S and the uronic acid GlcA, but not IduA, producing oligosaccharides that have unsaturated 4-deoxy-L-threo-hex-4-enopyranosiduronic acid (deltaUA) at the non-reducing end. The most abundant end products in the degradation of the ulvan polysaccharide were deltaUA-Rha3S disaccharides and deltaUA-Rha3S-IduA-Rha3S and deltaUA-Rha3S-Xyl-Rha3S tetrasaccharides. The chain is Ulvan lyase, short isoform from Alteromonas sp. (strain LOR).